Reading from the N-terminus, the 181-residue chain is Protein Syd (181 aa).

This sequence belongs to the Syd family.

The protein resides in the cell inner membrane. Its function is as follows. Interacts with the SecY protein in vivo. May bind preferentially to an uncomplexed state of SecY, thus functioning either as a chelating agent for excess SecY in the cell or as a regulatory factor that negatively controls the translocase function. The protein is Protein Syd of Shigella flexneri serotype 5b (strain 8401).